Consider the following 166-residue polypeptide: Phospholipase A2 inhibitor clone 08 (166 aa).

The first 19 residues, 1 to 19, serve as a signal peptide directing secretion; sequence MRLILLSSLLLLGIFLANG. The region spanning 46–161 is the C-type lectin domain; it reads LKGAFLTVHR…CDDNLLVVCE (116 aa). Cystine bridges form between Cys-83–Cys-160 and Cys-138–Cys-152. Asn-122 is a glycosylation site (N-linked (GlcNAc...) asparagine).

Belongs to the alpha-type phospholipase A2 inhibitor family. As to quaternary structure, homotrimer; non-covalently linked. In terms of tissue distribution, expressed by the liver.

It localises to the secreted. This phospholipase A2 inhibitor binds directly phospholipase A2 in the presence or absence of calcium. The polypeptide is Phospholipase A2 inhibitor clone 08 (Bothrops moojeni (Lance-headed viper)).